The sequence spans 464 residues: UDP-glycosyltransferase 83A1 (464 aa).

Residues S295, 341–343 (APQ), 358–366 (HCGWNSTLE), and 380–383 (FADQ) each bind UDP-alpha-D-glucose.

This sequence belongs to the UDP-glycosyltransferase family.

In Arabidopsis thaliana (Mouse-ear cress), this protein is UDP-glycosyltransferase 83A1 (UGT83A1).